The following is an 850-amino-acid chain: Trimethylamine-N-oxide reductase (850 aa).

Residues 1–39 (MKNKDSLHVSRRRFLAQLGGLTVAGMLGPSLLTPRSARA) constitute a signal peptide (tat-type signal). S191 contributes to the Mo-bis(molybdopterin guanine dinucleotide) binding site.

The protein belongs to the prokaryotic molybdopterin-containing oxidoreductase family. The cofactor is Mo-bis(molybdopterin guanine dinucleotide). Post-translationally, predicted to be exported by the Tat system. The position of the signal peptide cleavage has not been experimentally proven.

Its subcellular location is the periplasm. The catalysed reaction is trimethylamine + 2 Fe(III)-[cytochrome c] + H2O = trimethylamine N-oxide + 2 Fe(II)-[cytochrome c] + 3 H(+). Reduces trimethylamine-N-oxide (TMAO) into trimethylamine; an anaerobic reaction coupled to energy-yielding reactions. The sequence is that of Trimethylamine-N-oxide reductase (torA) from Salmonella typhimurium (strain LT2 / SGSC1412 / ATCC 700720).